We begin with the raw amino-acid sequence, 227 residues long: MAGSVAIVGIFVALLAVAGEAAVFTVVNQCPFTVWAASVPVGGGRQLNRGESWRITAPAGTTAARIWARTGCKFDASGRGSCRTGDCGGVLQCTGYGRAPNTLAEYALKQFNNLDFFDISLIDGFNVPMSFLPDGGSGCSRGPRCAVDVNARCPAELRQDGVCNNACPVFKKDEYCCVGSAANDCHPTNYSRYFKGQCPDAYSYPKDDATSTFTCPAGTNYKVVFCP.

The N-terminal stretch at 1 to 20 is a signal peptide; that stretch reads MAGSVAIVGIFVALLAVAGE. Intrachain disulfides connect Cys30–Cys226, Cys72–Cys82, Cys87–Cys93, Cys139–Cys215, Cys145–Cys198, Cys153–Cys163, Cys167–Cys176, and Cys177–Cys185.

The protein belongs to the thaumatin family.

In terms of biological role, has antifungal activity. Inhibits Candida albicans and Trichoderma reesei; marginal inhibition observed against Alternaria solani and Neurospora crassa. This chain is Zeamatin (Zlp), found in Zea mays (Maize).